A 134-amino-acid chain; its full sequence is MKPLIRRLSRIADSSSCNRNRSGDIHHPTSTYSSSVFLVKRATVASSVPSGHVPVNVGEDKERFVVSAELLNHPVFVGLLNRSAQEYGYTQKGVLHIPCNVFVFEQVVESLRSGIADDTSELIASLSGEDVSTE.

This sequence belongs to the ARG7 family. Interacts with and inhibits PP2C-D subfamily of type 2C phosphatases such as PP2C67/PP2C-D1.

Its subcellular location is the cytoplasm. Functionally, provide a mechanistic link between auxin and plasma membrane H(+)-ATPases (PM H(+)-ATPases, e.g. AHA1 and AHA2), and triggers PM H(+)-ATPases activity by promoting phosphorylation of their C-terminal autoinhibitory domain as a result of PP2C-D subfamily of type 2C phosphatases inhibition, thus leading to the acidification of the apoplast and the facilitation of solutes and water uptake to drive cell expansion. Plays a role in the regulation of cell expansion, root meristem patterning and auxin transport. The chain is Auxin-responsive protein SAUR40 from Arabidopsis thaliana (Mouse-ear cress).